We begin with the raw amino-acid sequence, 192 residues long: MAWPCISRLCCLARRWNQLDRSDVAVPLTLHSYSDLESEEPIPGGVPSRRGPSPAGSRDPGRDVPLTQYQRDFGVWTAPSGSRDATQGRGPGASSRRTKPSATPGRGVYVLPIGDADAAAVATTSYRQEFQAWTGVKPSRSTKVKPAKVITTHSSGWDGSPRAGFQAPEVRKKFAPNPSAIFQASAPRILNV.

S-palmitoyl cysteine attachment occurs at residues cysteine 5, cysteine 10, and cysteine 11. Residues 36–106 (LESEEPIPGG…RTKPSATPGR (71 aa)) form a disordered region. At serine 38 the chain carries Phosphoserine. A compositionally biased stretch (low complexity) spans 43–58 (PGGVPSRRGPSPAGSR). 2 mn regions span residues 123 to 136 (TTSY…WTGV) and 158 to 170 (DGSP…APEV). Position 160 is a phosphoserine (serine 160).

This sequence belongs to the STOP family. Interacts with calmodulin. Post-translationally, palmitoylated. Palmitoylation enhances association with microtubules.

Its subcellular location is the golgi apparatus. It localises to the cytoplasm. The protein localises to the cytoskeleton. Its function is as follows. May have microtubule-stabilizing activity. The protein is MAP6 domain-containing protein 1 (MAP6D1) of Bos taurus (Bovine).